We begin with the raw amino-acid sequence, 325 residues long: Diaminopimelate epimerase (325 aa).

N11 and N69 together coordinate substrate. C78 acts as the Proton donor in catalysis. Residues G79 to N80, N166, N203, and E221 to R222 each bind substrate. C230 functions as the Proton acceptor in the catalytic mechanism. Position 231-232 (G231–T232) interacts with substrate.

Belongs to the diaminopimelate epimerase family. As to quaternary structure, homodimer.

Its subcellular location is the cytoplasm. The catalysed reaction is (2S,6S)-2,6-diaminopimelate = meso-2,6-diaminopimelate. It functions in the pathway amino-acid biosynthesis; L-lysine biosynthesis via DAP pathway; DL-2,6-diaminopimelate from LL-2,6-diaminopimelate: step 1/1. Functionally, catalyzes the stereoinversion of LL-2,6-diaminopimelate (L,L-DAP) to meso-diaminopimelate (meso-DAP), a precursor of L-lysine and an essential component of the bacterial peptidoglycan. This chain is Diaminopimelate epimerase, found in Ligilactobacillus salivarius (strain UCC118) (Lactobacillus salivarius).